Reading from the N-terminus, the 689-residue chain is Elongation factor G (689 aa).

A tr-type G domain is found at 8–282; that stretch reads KKTRNIGIMA…AVIDYLPSPV (275 aa). GTP-binding positions include 17-24, 81-85, and 135-138; these read AHIDAGKT, DTPGH, and NKMD.

This sequence belongs to the TRAFAC class translation factor GTPase superfamily. Classic translation factor GTPase family. EF-G/EF-2 subfamily.

Its subcellular location is the cytoplasm. Catalyzes the GTP-dependent ribosomal translocation step during translation elongation. During this step, the ribosome changes from the pre-translocational (PRE) to the post-translocational (POST) state as the newly formed A-site-bound peptidyl-tRNA and P-site-bound deacylated tRNA move to the P and E sites, respectively. Catalyzes the coordinated movement of the two tRNA molecules, the mRNA and conformational changes in the ribosome. This Halothermothrix orenii (strain H 168 / OCM 544 / DSM 9562) protein is Elongation factor G.